Consider the following 118-residue polypeptide: Large ribosomal subunit protein bL20 (118 aa).

Belongs to the bacterial ribosomal protein bL20 family.

Functionally, binds directly to 23S ribosomal RNA and is necessary for the in vitro assembly process of the 50S ribosomal subunit. It is not involved in the protein synthesizing functions of that subunit. The sequence is that of Large ribosomal subunit protein bL20 from Sulfurovum sp. (strain NBC37-1).